The chain runs to 339 residues: DNA-directed RNA polymerase subunit alpha (339 aa).

Residues 1-233 (MVREEVAGST…DLFLPFLHAE (233 aa)) are alpha N-terminal domain (alpha-NTD). Positions 264–339 (KKGIPLNSIF…IDLLKNKLSF (76 aa)) are alpha C-terminal domain (alpha-CTD).

It belongs to the RNA polymerase alpha chain family. In plastids the minimal PEP RNA polymerase catalytic core is composed of four subunits: alpha, beta, beta', and beta''. When a (nuclear-encoded) sigma factor is associated with the core the holoenzyme is formed, which can initiate transcription.

It is found in the plastid. Its subcellular location is the chloroplast. The catalysed reaction is RNA(n) + a ribonucleoside 5'-triphosphate = RNA(n+1) + diphosphate. Functionally, DNA-dependent RNA polymerase catalyzes the transcription of DNA into RNA using the four ribonucleoside triphosphates as substrates. In Aegilops tauschii (Tausch's goatgrass), this protein is DNA-directed RNA polymerase subunit alpha.